Reading from the N-terminus, the 330-residue chain is Fructose-1,6-bisphosphatase class 1 (330 aa).

Mg(2+) is bound by residues glutamate 84, aspartate 103, leucine 105, and aspartate 106. Substrate contacts are provided by residues 106 to 109, asparagine 196, and lysine 262; that span reads DGSS. Glutamate 268 contributes to the Mg(2+) binding site.

It belongs to the FBPase class 1 family. Homotetramer. It depends on Mg(2+) as a cofactor.

It localises to the cytoplasm. It carries out the reaction beta-D-fructose 1,6-bisphosphate + H2O = beta-D-fructose 6-phosphate + phosphate. The protein operates within carbohydrate biosynthesis; gluconeogenesis. The polypeptide is Fructose-1,6-bisphosphatase class 1 (Shewanella baltica (strain OS185)).